A 399-amino-acid polypeptide reads, in one-letter code: Phosphoglycerate kinase (399 aa).

Substrate-binding positions include 22-24 (DFN), R37, 60-63 (HFGR), R118, and R151. Residues K201, E322, and 352-355 (GGDS) each bind ATP.

This sequence belongs to the phosphoglycerate kinase family. Monomer.

It is found in the cytoplasm. It carries out the reaction (2R)-3-phosphoglycerate + ATP = (2R)-3-phospho-glyceroyl phosphate + ADP. It functions in the pathway carbohydrate degradation; glycolysis; pyruvate from D-glyceraldehyde 3-phosphate: step 2/5. The protein is Phosphoglycerate kinase of Wolbachia sp. subsp. Brugia malayi (strain TRS).